Here is a 315-residue protein sequence, read N- to C-terminus: MSSSALRIGTRASRLALWQAEWVQQQLETLHPGLSVVLVPITTKGDKILDVPLAKVGGKGLFVKEIEEALYDGSIDLAVHSMKDVPSVLPPGLILPCIPPREDPRDALVTPDGRSFAQLPQGARIGTSALRRQAQLLHRRPDLDIVSLRGNVETRLRKMEEEDMDGIVLAAAGLKRLELAERIAEYLSVDVSLPAIGQGALGLECREGDDRTLELIAPLHDADTAVAVRAERAFLRRLNGGCQVPLAAHATVAEQTLTMVGLVAEVDGGSLIKETLAAPVAQAEAVGCQLAETLLARGADRILAALDITPTPLVP.

Cys-242 carries the post-translational modification S-(dipyrrolylmethanemethyl)cysteine.

This sequence belongs to the HMBS family. Monomer. Requires dipyrromethane as cofactor.

It catalyses the reaction 4 porphobilinogen + H2O = hydroxymethylbilane + 4 NH4(+). It participates in porphyrin-containing compound metabolism; protoporphyrin-IX biosynthesis; coproporphyrinogen-III from 5-aminolevulinate: step 2/4. Its function is as follows. Tetrapolymerization of the monopyrrole PBG into the hydroxymethylbilane pre-uroporphyrinogen in several discrete steps. This chain is Porphobilinogen deaminase, found in Syntrophotalea carbinolica (strain DSM 2380 / NBRC 103641 / GraBd1) (Pelobacter carbinolicus).